A 78-amino-acid chain; its full sequence is Small ribosomal subunit protein uS17 (78 aa).

This sequence belongs to the universal ribosomal protein uS17 family. In terms of assembly, part of the 30S ribosomal subunit.

One of the primary rRNA binding proteins, it binds specifically to the 5'-end of 16S ribosomal RNA. The polypeptide is Small ribosomal subunit protein uS17 (Agrobacterium fabrum (strain C58 / ATCC 33970) (Agrobacterium tumefaciens (strain C58))).